The chain runs to 207 residues: C-type lectin domain family 2 member D (207 aa).

At 1-41 (MCVTKASLPMLSPTGSPQEVEVGKILQGKRHGTISPESCAK) the chain is on the cytoplasmic side. Phosphoserine occurs at positions 7 and 12. Residues 42-62 (LYCYYGVIMVLTVAVIALSVA) traverse the membrane as a helical; Signal-anchor for type II membrane protein segment. Topologically, residues 63-207 (LSATKTEQIP…LHCQTPFFPS (145 aa)) are extracellular. C80 and C91 are oxidised to a cystine. The C-type lectin domain maps to 87 to 202 (VENKCFYFSE…LNSYSLHCQT (116 aa)). N-linked (GlcNAc...) asparagine glycosylation occurs at N100.

As to quaternary structure, homodimer; disulfide-linked. N-glycosylated. Detected in fetal heart, brain, lung, chondrocytes, perichondrium and osteoblasts, and in adult splenocytes, thymocytes, lymph-node cells, osteoblasts, growth plate chondrocytes and skeletal muscle overlying the bone (at protein level). Ubiquitous. Detected in thymus, bone marrow, lung, gut, heart, skeletal muscle, ovary, spleen, ileum, liver and kidney.

It localises to the cell membrane. Functionally, receptor for KLRB1B that protects target cells against natural killer cell-mediated lysis. Inhibits osteoclast formation. Binds high molecular weight sulfated glycosaminoglycans. The polypeptide is C-type lectin domain family 2 member D (Clec2d) (Mus musculus (Mouse)).